The following is a 223-amino-acid chain: Ribonuclease T (223 aa).

One can recognise an Exonuclease domain in the interval 20–194; the sequence is VVIDVETAGF…YDTERTAELF (175 aa). Mg(2+) is bound by residues Asp23, Glu25, His181, and Asp186. His181 functions as the Proton donor/acceptor in the catalytic mechanism.

The protein belongs to the RNase T family. In terms of assembly, homodimer. Mg(2+) serves as cofactor.

Its function is as follows. Trims short 3' overhangs of a variety of RNA species, leaving a one or two nucleotide 3' overhang. Responsible for the end-turnover of tRNA: specifically removes the terminal AMP residue from uncharged tRNA (tRNA-C-C-A). Also appears to be involved in tRNA biosynthesis. The sequence is that of Ribonuclease T from Shewanella baltica (strain OS155 / ATCC BAA-1091).